The chain runs to 81 residues: U-megalopygitoxin(3)-Mo4 (81 aa).

The N-terminal stretch at 1–20 (MNSKFVLIVVFLAVVSICFA) is a signal peptide.

Belongs to the caterpillar 3 family. In terms of processing, contains 3 disulfide bonds. As to expression, expressed by the venom apparatus.

It is found in the secreted. Probable toxin. In Megalopyge opercularis (Southern flannel moth), this protein is U-megalopygitoxin(3)-Mo4.